Here is a 387-residue protein sequence, read N- to C-terminus: 3-ketoacyl-CoA thiolase (387 aa).

Cysteine 91 (acyl-thioester intermediate) is an active-site residue. Residues histidine 343 and cysteine 373 each act as proton acceptor in the active site.

It belongs to the thiolase-like superfamily. Thiolase family. As to quaternary structure, heterotetramer of two alpha chains (FadB) and two beta chains (FadA).

It localises to the cytoplasm. It catalyses the reaction an acyl-CoA + acetyl-CoA = a 3-oxoacyl-CoA + CoA. The protein operates within lipid metabolism; fatty acid beta-oxidation. Its function is as follows. Catalyzes the final step of fatty acid oxidation in which acetyl-CoA is released and the CoA ester of a fatty acid two carbons shorter is formed. This Vibrio cholerae serotype O1 (strain ATCC 39315 / El Tor Inaba N16961) protein is 3-ketoacyl-CoA thiolase.